A 282-amino-acid chain; its full sequence is Protein-glutamine deamidase Cif (282 aa).

The interval 1–16 (MKDITLPPPTSASCLT) is translocation domain (TD). Catalysis depends on residues cysteine 109, histidine 165, and glutamine 185.

The protein belongs to the Cif family.

The protein resides in the secreted. Its subcellular location is the host nucleus. The enzyme catalyses L-glutaminyl-[protein] + H2O = L-glutamyl-[protein] + NH4(+). Its function is as follows. Protein-glutamine deamidase effector that inhibits the host cell cycle and other key cellular processes such as the actin network and programmed-cell death. Acts by mediating the side chain deamidation of 'Gln-40' of host NEDD8, converting it to glutamate, thereby abolishing the activity of cullin-RING-based E3 ubiquitin-protein ligase complexes (CRL complexes). Inactivation of CRL complexes prevents ubiquitination and subsequent degradation of the cyclin-dependent kinase inhibitors CDKN1A/p21 and CDKN1B/p27, leading to G1 and G2 cell cycle arrests in host cells. Also able to catalyze deamidation of 'Gln-40' of host ubiquitin in vitro; however, NEDD8 constitutes the preferred substrate in vivo. The protein is Protein-glutamine deamidase Cif of Escherichia coli.